Consider the following 643-residue polypeptide: Pescadillo homolog (643 aa).

Over residues 305–323 (EKTKEKNHKSDNNPHEHTT) the composition is skewed to basic and acidic residues. A disordered region spans residues 305-329 (EKTKEKNHKSDNNPHEHTTNIDNNN). One can recognise a BRCT domain in the interval 378–474 (KLKELFKNHI…NILPCSDYLT (97 aa)). The stretch at 531–615 (NYKEEEEEEN…IVLSKKKRKL (85 aa)) forms a coiled coil.

This sequence belongs to the pescadillo family. Interacts with dual specificity protein phosphatase YVH1.

The protein resides in the nucleus. It is found in the nucleolus. Its subcellular location is the nucleoplasm. In terms of biological role, required for maturation of ribosomal RNAs and formation of the large ribosomal subunit. The protein is Pescadillo homolog of Plasmodium falciparum (isolate 3D7).